The primary structure comprises 206 residues: LexA repressor (206 aa).

Residues R28 to K48 constitute a DNA-binding region (H-T-H motif). Residues S123 and K160 each act as for autocatalytic cleavage activity in the active site.

It belongs to the peptidase S24 family. In terms of assembly, homodimer.

The enzyme catalyses Hydrolysis of Ala-|-Gly bond in repressor LexA.. Its function is as follows. Represses a number of genes involved in the response to DNA damage (SOS response), including recA and lexA. In the presence of single-stranded DNA, RecA interacts with LexA causing an autocatalytic cleavage which disrupts the DNA-binding part of LexA, leading to derepression of the SOS regulon and eventually DNA repair. The protein is LexA repressor of Shewanella oneidensis (strain ATCC 700550 / JCM 31522 / CIP 106686 / LMG 19005 / NCIMB 14063 / MR-1).